Consider the following 183-residue polypeptide: Probable transcription termination protein NusA (183 aa).

Residues 32–98 form the KH domain; it reads DERVAFIVKE…DDVWVKRVGK (67 aa). The disordered stretch occupies residues 149-183; the sequence is RKRAKRPVVKDQQQEQTETKQETDVQQDVKETVKE. Residues 156–183 are compositionally biased toward basic and acidic residues; that stretch reads VVKDQQQEQTETKQETDVQQDVKETVKE.

Belongs to the NusA family.

It localises to the cytoplasm. Functionally, participates in transcription termination. The polypeptide is Probable transcription termination protein NusA (Methanocaldococcus jannaschii (strain ATCC 43067 / DSM 2661 / JAL-1 / JCM 10045 / NBRC 100440) (Methanococcus jannaschii)).